A 480-amino-acid polypeptide reads, in one-letter code: Siroheme synthase 1 (480 aa).

The interval Met-1 to Leu-203 is precorrin-2 dehydrogenase /sirohydrochlorin ferrochelatase. Residues Glu-22 to Val-23 and Leu-43 to Ala-44 contribute to the NAD(+) site. Ser-128 bears the Phosphoserine mark. The interval Gly-222–Ala-480 is uroporphyrinogen-III C-methyltransferase. Pro-231 serves as a coordination point for S-adenosyl-L-methionine. The active-site Proton acceptor is Asp-254. Residue Lys-276 is the Proton donor of the active site. Residues Gly-307–Asp-309, Ile-312, Thr-337–Ala-338, Met-389, and Gly-418 contribute to the S-adenosyl-L-methionine site.

The protein in the N-terminal section; belongs to the precorrin-2 dehydrogenase / sirohydrochlorin ferrochelatase family. This sequence in the C-terminal section; belongs to the precorrin methyltransferase family.

It carries out the reaction uroporphyrinogen III + 2 S-adenosyl-L-methionine = precorrin-2 + 2 S-adenosyl-L-homocysteine + H(+). The enzyme catalyses precorrin-2 + NAD(+) = sirohydrochlorin + NADH + 2 H(+). The catalysed reaction is siroheme + 2 H(+) = sirohydrochlorin + Fe(2+). The protein operates within cofactor biosynthesis; adenosylcobalamin biosynthesis; precorrin-2 from uroporphyrinogen III: step 1/1. It participates in cofactor biosynthesis; adenosylcobalamin biosynthesis; sirohydrochlorin from precorrin-2: step 1/1. Its pathway is porphyrin-containing compound metabolism; siroheme biosynthesis; precorrin-2 from uroporphyrinogen III: step 1/1. It functions in the pathway porphyrin-containing compound metabolism; siroheme biosynthesis; siroheme from sirohydrochlorin: step 1/1. The protein operates within porphyrin-containing compound metabolism; siroheme biosynthesis; sirohydrochlorin from precorrin-2: step 1/1. In terms of biological role, multifunctional enzyme that catalyzes the SAM-dependent methylations of uroporphyrinogen III at position C-2 and C-7 to form precorrin-2 via precorrin-1. Then it catalyzes the NAD-dependent ring dehydrogenation of precorrin-2 to yield sirohydrochlorin. Finally, it catalyzes the ferrochelation of sirohydrochlorin to yield siroheme. The protein is Siroheme synthase 1 of Pectobacterium atrosepticum (strain SCRI 1043 / ATCC BAA-672) (Erwinia carotovora subsp. atroseptica).